The following is a 218-amino-acid chain: Testis expressed protein 56 (218 aa).

In Rattus norvegicus (Rat), this protein is Testis expressed protein 56 (Tex56).